A 138-amino-acid chain; its full sequence is Large ribosomal subunit protein uL16 (138 aa).

Over residues 1-15 (MLSPKKVKYRKKQRG) the composition is skewed to basic residues. Residues 1 to 21 (MLSPKKVKYRKKQRGRLSGEA) are disordered.

It belongs to the universal ribosomal protein uL16 family. As to quaternary structure, part of the 50S ribosomal subunit.

Its function is as follows. Binds 23S rRNA and is also seen to make contacts with the A and possibly P site tRNAs. This Borreliella burgdorferi (strain ATCC 35210 / DSM 4680 / CIP 102532 / B31) (Borrelia burgdorferi) protein is Large ribosomal subunit protein uL16.